A 101-amino-acid polypeptide reads, in one-letter code: Small ribosomal subunit protein uS14 (101 aa).

Residues 36 to 61 (ASAEDRRAARQKLQSLPRNSSPVRQR) are disordered. Residues 47 to 59 (KLQSLPRNSSPVR) are compositionally biased toward polar residues.

It belongs to the universal ribosomal protein uS14 family. As to quaternary structure, part of the 30S ribosomal subunit. Contacts proteins S3 and S10.

Its function is as follows. Binds 16S rRNA, required for the assembly of 30S particles and may also be responsible for determining the conformation of the 16S rRNA at the A site. The protein is Small ribosomal subunit protein uS14 of Methylobacillus flagellatus (strain ATCC 51484 / DSM 6875 / VKM B-1610 / KT).